We begin with the raw amino-acid sequence, 477 residues long: Methylenetetrahydrofolate--tRNA-(uracil-5-)-methyltransferase TrmFO (477 aa).

Residue 14 to 19 (GGGLAG) coordinates FAD.

It belongs to the MnmG family. TrmFO subfamily. FAD serves as cofactor.

It is found in the cytoplasm. It carries out the reaction uridine(54) in tRNA + (6R)-5,10-methylene-5,6,7,8-tetrahydrofolate + NADH + H(+) = 5-methyluridine(54) in tRNA + (6S)-5,6,7,8-tetrahydrofolate + NAD(+). The enzyme catalyses uridine(54) in tRNA + (6R)-5,10-methylene-5,6,7,8-tetrahydrofolate + NADPH + H(+) = 5-methyluridine(54) in tRNA + (6S)-5,6,7,8-tetrahydrofolate + NADP(+). Catalyzes the folate-dependent formation of 5-methyl-uridine at position 54 (M-5-U54) in all tRNAs. The polypeptide is Methylenetetrahydrofolate--tRNA-(uracil-5-)-methyltransferase TrmFO (Rhizobium etli (strain ATCC 51251 / DSM 11541 / JCM 21823 / NBRC 15573 / CFN 42)).